A 1005-amino-acid chain; its full sequence is Non-structural polyprotein 1A (1005 aa).

The next 4 membrane-spanning stretches (helical) occupy residues 239–259 (PDGAFDKESLALECSKQMDYM), 286–306 (DEIVTAIRTVVRFAMDFSLAY), 313–333 (VLILTRNKKHAIISACCALVA), and 344–364 (TLVLTYAPSETAIAGCIYGLG). Catalysis depends on charge relay system; for serine protease activity residues histidine 524, aspartate 556, and serine 621. Position 753 is an O-(5'-phospho-RNA)-tyrosine (tyrosine 753). The disordered stretch occupies residues 940-984 (PVIQQVEQQPQVEQQQQPQQPVVEEKKRTPPPKPQRKPKTGAKAK). Residues 941–961 (VIQQVEQQPQVEQQQQPQQPV) are compositionally biased toward low complexity.

It belongs to the astroviridae polyprotein 1A family. As to quaternary structure, monomer. In terms of processing, cleaved by the viral and host proteases. The protease is probably autocatalytically cleaved.

It is found in the host membrane. The enzyme catalyses RNA(n) + a ribonucleoside 5'-triphosphate = RNA(n+1) + diphosphate. Responsible for the cleavage of the polyprotein into functional products. Its function is as follows. Protein covalently attached to the 5' extremity of the genomic and subgenomic RNAs. It may serve as a primer for the replicase. In Avian nephritis virus 1 (ANV-1), this protein is Non-structural polyprotein 1A (ORF1).